The primary structure comprises 347 residues: Quinolinate synthase (347 aa).

Iminosuccinate contacts are provided by His-47 and Ser-68. Cys-113 provides a ligand contact to [4Fe-4S] cluster. Residues 139–141 and Ser-156 each bind iminosuccinate; that span reads YAN. Cys-200 provides a ligand contact to [4Fe-4S] cluster. Iminosuccinate contacts are provided by residues 226–228 and Thr-243; that span reads HPE. Cys-297 is a [4Fe-4S] cluster binding site.

The protein belongs to the quinolinate synthase family. Type 1 subfamily. [4Fe-4S] cluster serves as cofactor.

The protein resides in the cytoplasm. The enzyme catalyses iminosuccinate + dihydroxyacetone phosphate = quinolinate + phosphate + 2 H2O + H(+). It functions in the pathway cofactor biosynthesis; NAD(+) biosynthesis; quinolinate from iminoaspartate: step 1/1. In terms of biological role, catalyzes the condensation of iminoaspartate with dihydroxyacetone phosphate to form quinolinate. This Escherichia coli O7:K1 (strain IAI39 / ExPEC) protein is Quinolinate synthase.